Reading from the N-terminus, the 250-residue chain is Peroxiredoxin (250 aa).

A Thioredoxin domain is found at 6 to 163 (PLIGERFPEM…ILRIVKALKL (158 aa)). Residue Cys50 is the Cysteine sulfenic acid (-SOH) intermediate of the active site. Arg126 serves as a coordination point for substrate. The cysteines at positions 207 and 213 are disulfide-linked.

Belongs to the peroxiredoxin family. Prx6 subfamily. In terms of assembly, homodecamer. Pentamer of dimers that assemble into a ring structure.

It localises to the cytoplasm. The enzyme catalyses a hydroperoxide + [thioredoxin]-dithiol = an alcohol + [thioredoxin]-disulfide + H2O. Thiol-specific peroxidase that catalyzes the reduction of hydrogen peroxide and organic hydroperoxides to water and alcohols, respectively. Plays a role in cell protection against oxidative stress by detoxifying peroxides. This Aeropyrum pernix (strain ATCC 700893 / DSM 11879 / JCM 9820 / NBRC 100138 / K1) protein is Peroxiredoxin.